Consider the following 131-residue polypeptide: Leptin receptor overlapping transcript-like 1 (131 aa).

Helical transmembrane passes span 7 to 27, 32 to 52, 69 to 89, and 100 to 120; these read LISLSFGGAIGLMFLMLGCAL, KYWPLFVLFFYILSPIPYCIA, LAIFLTTGIVVSAFGLPIVFA, and ALVLTGNTVIFATILGFFLVF.

It belongs to the OB-RGRP/VPS55 family. Interacts with RAB13. Widely expressed, with highest expression in heart, testis, adrenal gland, thymus, and spleen, and lowest expression in lung and skeletal muscle.

Its subcellular location is the membrane. In terms of biological role, negatively regulates growth hormone (GH) receptor cell surface expression in liver. May play a role in liver resistance to GH during periods of reduced nutrient availability. The protein is Leptin receptor overlapping transcript-like 1 (LEPROTL1) of Homo sapiens (Human).